Reading from the N-terminus, the 380-residue chain is Histone deacetylase-like amidohydrolase (380 aa).

Histidine 144 (proton donor/acceptor) is an active-site residue. Aspartate 181, histidine 183, and aspartate 269 together coordinate Zn(2+).

The protein belongs to the histone deacetylase family. In terms of assembly, homotetramer; dimer of head-to-head dimers. It depends on Zn(2+) as a cofactor.

Is inhibited by azobenzenes, stilbenes and arylazopyrazoles. Functionally, probable protein deacetylase that catalyzes deacetylation of acetylated lysine residues. In vitro, exhibits high activity against artificial HDAC (histone deacetylase) substrates containing acetylated and trifluoroacetylated lysine residues. Is not able to deacetylate acetylated polyamines. The polypeptide is Histone deacetylase-like amidohydrolase (Pseudomonas aeruginosa (strain ATCC 15692 / DSM 22644 / CIP 104116 / JCM 14847 / LMG 12228 / 1C / PRS 101 / PAO1)).